The primary structure comprises 69 residues: Large ribosomal subunit protein bL28 (69 aa).

It belongs to the bacterial ribosomal protein bL28 family.

This chain is Large ribosomal subunit protein bL28, found in Lawsonia intracellularis (strain PHE/MN1-00).